The following is a 534-amino-acid chain: High affinity cGMP-specific 3',5'-cyclic phosphodiesterase 9A (534 aa).

A PDEase domain is found at 175 to 496; that stretch reads PRRDVPTYPK…EHYEELKQLD (322 aa). H251 functions as the Proton donor in the catalytic mechanism. Residue 251 to 255 participates in 3',5'-cyclic GMP binding; sequence HNFRH. Residues H255, H291, and D292 each contribute to the Zn(2+) site. D292 is a 3',5'-cyclic GMP binding site. D292 contributes to the Mg(2+) binding site. S318 bears the Phosphoserine mark. 3',5'-cyclic GMP-binding positions include D401, Y423, and 451–452; that span reads AQ. A Zn(2+)-binding site is contributed by D401. A disordered region spans residues 500–534; sequence KELQKKTESLTSGAPENTTEKNRDAKDSEGHSPPN. Positions 517-534 are enriched in basic and acidic residues; it reads TTEKNRDAKDSEGHSPPN.

Belongs to the cyclic nucleotide phosphodiesterase family. PDE9 subfamily. As to quaternary structure, homodimer. Zn(2+) is required as a cofactor. Mg(2+) serves as cofactor. In terms of tissue distribution, highly expressed in kidney. Lower levels in liver, lung and brain. Widely expressed in brain, with highest expression in cerebellar Purkinje cells. Present in heart (at protein level).

The protein localises to the cell projection. The protein resides in the ruffle membrane. It localises to the cytoplasm. Its subcellular location is the perinuclear region. It is found in the golgi apparatus. The protein localises to the endoplasmic reticulum. The protein resides in the cell membrane. It localises to the sarcolemma. The enzyme catalyses 3',5'-cyclic GMP + H2O = GMP + H(+). Its pathway is purine metabolism; 3',5'-cyclic GMP degradation; GMP from 3',5'-cyclic GMP: step 1/1. Inhibited by SCH 51866 and moderately, by zaprinast. Specifically inhibited by PF-04447943 (6-[(3S,4S)-4-methyl-1-(pyrimidin-2-ylmethyl)pyrrolidin-3-yl]-1-(tetrahydro-2H-pyran-4-yl)-1,5-dihydro-4H-pyrazolo[3,4-d]pyrimidin-4-one). In terms of biological role, specifically hydrolyzes the second messenger cGMP, which is a key regulator of many important physiological processes. Highly specific: compared to other members of the cyclic nucleotide phosphodiesterase family, has the highest affinity and selectivity for cGMP. Specifically regulates natriuretic-peptide-dependent cGMP signaling in heart, acting as a regulator of cardiac hypertrophy in myocytes and muscle. Does not regulate nitric oxide-dependent cGMP in heart. Additional experiments are required to confirm whether its ability to hydrolyze natriuretic-peptide-dependent cGMP is specific to heart or is a general feature of the protein. In brain, involved in cognitive function, such as learning and long-term memory. The sequence is that of High affinity cGMP-specific 3',5'-cyclic phosphodiesterase 9A (Pde9a) from Mus musculus (Mouse).